Here is a 192-residue protein sequence, read N- to C-terminus: Intraflagellar transport protein 22 (192 aa).

GTP contacts are provided by residues 12-19 (GPQRTGKT) and 62-69 (WDVSGSVQ).

It belongs to the small GTPase superfamily. Rab family. Component of the IFT complex B, composed of IFT88, IFT70, IFT52, IFT46, IFT27, IFT25 and IFT22.

It is found in the cell projection. Its subcellular location is the cilium. The protein localises to the flagellum. Functionally, component of the intraflagellar transport (IFT) complex B. Functions in regulating the cellular pool size of both complex A and complex B and thus plays a critical role in determining the cellular availability of IFT particles. The protein is Intraflagellar transport protein 22 (FAP9) of Chlamydomonas reinhardtii (Chlamydomonas smithii).